The chain runs to 333 residues: Antimicrobial peptides (333 aa).

An N-terminal signal peptide occupies residues 1-23 (MVQKGVVFGVLLILFICSTLTSA). The tract at residues 23–52 (ADSKPNPTKEEEPAKKPDEVSVKSGGPEVS) is disordered. A propeptide spans 24-54 (DSKPNPTKEEEPAKKPDEVSVKSGGPEVSED) (acidic peptide 1). Basic and acidic residues predominate over residues 29–43 (PTKEEEPAKKPDEVS). Glutamine 55 carries the post-translational modification Pyrrolidone carboxylic acid. 2 disulfide bridges follow: cysteine 60–cysteine 70 and cysteine 61–cysteine 74. Residues 75–102 (ANAEEAAAAIPEASEELAQEEAPVYSED) constitute a propeptide, acidic peptide 2. Glutamine 103 carries the pyrrolidone carboxylic acid modification. Cystine bridges form between cysteine 108–cysteine 118 and cysteine 109–cysteine 122. Positions 123-148 (QNAEEAAAAIPEATEKAQEAPVYSED) are cleaved as a propeptide — acidic peptide 3. Residue glutamine 149 is modified to Pyrrolidone carboxylic acid. Intrachain disulfides connect cysteine 154–cysteine 164 and cysteine 155–cysteine 168. The propeptide at 169-196 (QNAEEAAAAVAIPEASEKAQEGPVYSED) is acidic peptide 4. The residue at position 197 (glutamine 197) is a Pyrrolidone carboxylic acid. 2 disulfide bridges follow: cysteine 202–cysteine 212 and cysteine 203–cysteine 216. Positions 217 to 232 (SNAADEVATPEDVEPG) are cleaved as a propeptide — acidic peptide 5. Glutamine 233 carries the pyrrolidone carboxylic acid modification. Disulfide bonds link cysteine 238–cysteine 248 and cysteine 239–cysteine 252. Positions 253-278 (HNAAEEATLKAFEEEAAREQPVYSED) are cleaved as a propeptide — acidic peptide 6. Pyrrolidone carboxylic acid is present on glutamine 279. Intrachain disulfides connect cysteine 284–cysteine 294 and cysteine 285–cysteine 298. Positions 299–333 (QSAEEAAAFQAGEVTASLMLIMFKACPCMGPVPSV) are cleaved as a propeptide — acidic peptide 7.

Post-translationally, the N-terminal of all peptides are blocked. The 4 cysteine residues of all peptides are involved in intrachain disulfide bonds.

The protein resides in the secreted. Its function is as follows. Plays a role in the defense of the germinating seed against microorganisms, by inhibiting the growth of a range of filamentous fungi and bacteria, especially Gram-positive bacteria. Not cytotoxic for cultured human cells and are the smallest known plant-derived antimicrobial peptides. Peptide IB-AMP4 has a higher antifungal activity than IB-AMP1. The chain is Antimicrobial peptides (AMP) from Impatiens balsamina (Balsam).